A 249-amino-acid chain; its full sequence is BPI fold-containing family A member 1 (249 aa).

The signal sequence occupies residues 1 to 15 (MFQVAGLIVFCGLLA). The tract at residues 81–86 (LLGGLL) is important for surfactant activity and antibacterial properties. An N-linked (GlcNAc...) asparagine glycan is attached at N151. A disulfide bridge connects residues C173 and C217.

It belongs to the BPI/LBP/Plunc superfamily. Plunc family. As to quaternary structure, monomer. Interacts (via N-terminus) with SCNN1B, a subunit of the heterotrimeric epithelial sodium channel (ENaC); this inhibits proteolytic activation of ENaC. In terms of tissue distribution, expressed in lung and trachea.

The protein localises to the secreted. In terms of biological role, lipid-binding protein which shows high specificity for the surfactant phospholipid dipalmitoylphosphatidylcholine (DPPC). Plays a role in the innate immune responses of the upper airways. Reduces the surface tension in secretions from airway epithelia and inhibits the formation of biofilm by pathogenic Gram-negative bacteria, such as P.aeruginosa and K.pneumoniae. Negatively regulates proteolytic cleavage of SCNN1G, an event that is required for activation of the epithelial sodium channel (ENaC), and thereby contributes to airway surface liquid homeostasis and proper clearance of mucus. Plays a role in the airway inflammatory response after exposure to irritants. May attract macrophages and neutrophils. The protein is BPI fold-containing family A member 1 (BPIFA1) of Sus scrofa (Pig).